A 198-amino-acid chain; its full sequence is Nucleoid occlusion factor SlmA (198 aa).

One can recognise an HTH tetR-type domain in the interval 9-70 (RNRREEILQA…SLIEFIEDSL (62 aa)). Residues 33–52 (TTAKLAANVGVSEAALYRHF) constitute a DNA-binding region (H-T-H motif). A coiled-coil region spans residues 119-144 (DRLQGRINQLFERIEMQLRQVLREKK).

The protein belongs to the nucleoid occlusion factor SlmA family. Homodimer. Interacts with FtsZ.

It is found in the cytoplasm. The protein localises to the nucleoid. In terms of biological role, required for nucleoid occlusion (NO) phenomenon, which prevents Z-ring formation and cell division over the nucleoid. Acts as a DNA-associated cell division inhibitor that binds simultaneously chromosomal DNA and FtsZ, and disrupts the assembly of FtsZ polymers. SlmA-DNA-binding sequences (SBS) are dispersed on non-Ter regions of the chromosome, preventing FtsZ polymerization at these regions. The chain is Nucleoid occlusion factor SlmA from Yersinia pseudotuberculosis serotype I (strain IP32953).